Consider the following 620-residue polypeptide: Transcription factor kayak (620 aa).

Disordered regions lie at residues 1-36 (MKVK…SNGV) and 184-288 (SDTD…EKRR). Positions 184 to 194 (SDTDDSNASWN) are enriched in polar residues. Composition is skewed to low complexity over residues 201–233 (GDTT…GANN) and 249–266 (ANNN…PAAR). Positions 284–347 (EEKRRIRRER…NQLKYVIEAH (64 aa)) constitute a bZIP domain. The segment at 286–305 (KRRIRRERNKAAAARCRKRR) is basic motif. The tract at residues 312-340 (LTEEVDALVKKGDTLKAEITTLTELRNQL) is leucine-zipper. The segment at 375 to 414 (STGGSSCGSVHSNHSHNNNNNNNNSNDSSSGTITGFDATL) is disordered. Positions 377–405 (GGSSCGSVHSNHSHNNNNNNNNSNDSSSG) are enriched in low complexity. Ser422 carries the post-translational modification Phosphoserine. 2 disordered regions span residues 447-466 (GLDS…AKRA) and 590-620 (SGPL…LCPL).

Belongs to the bZIP family. Fos subfamily. Homodimer. Heterodimer with Jra. The kay-Jra heterodimer binds more stably to the AP-1 site than either of the two proteins alone.

Its subcellular location is the nucleus. Developmentally regulated transcription factor AP-1 binds and recognizes the enhancer DNA sequence: 5'-TGA[CG]TCA-3'. May play a role in the function or determination of a particular subset of cells in the developing embryo. It is able to carry out its function either independently of or in conjunction with Jra. This is Transcription factor kayak from Drosophila willistoni (Fruit fly).